The primary structure comprises 733 residues: Polyribonucleotide nucleotidyltransferase (733 aa).

Asp-489 and Asp-495 together coordinate Mg(2+). The region spanning 556 to 615 (PKIDTIKIDVDKIKIVIGKGGETIDKIIAETGVKIDIDEEGNVSIYSSDQDAINRAKEII) is the KH domain. The S1 motif domain occupies 625–693 (DEVYHAKVVR…AKGRVDASMK (69 aa)). The disordered stretch occupies residues 691-733 (SMKVLLPRPPKSDKPKHHHDKGHHPHKEYKGHKDHQESPKTEE). Residues 704 to 723 (KPKHHHDKGHHPHKEYKGHK) show a composition bias toward basic residues. Basic and acidic residues predominate over residues 724-733 (DHQESPKTEE).

Belongs to the polyribonucleotide nucleotidyltransferase family. Requires Mg(2+) as cofactor.

It localises to the cytoplasm. The enzyme catalyses RNA(n+1) + phosphate = RNA(n) + a ribonucleoside 5'-diphosphate. Involved in mRNA degradation. Catalyzes the phosphorolysis of single-stranded polyribonucleotides processively in the 3'- to 5'-direction. This Streptococcus sanguinis (strain SK36) protein is Polyribonucleotide nucleotidyltransferase.